The sequence spans 101 residues: Small ribosomal subunit protein uS14 (101 aa).

It belongs to the universal ribosomal protein uS14 family. As to quaternary structure, part of the 30S ribosomal subunit. Contacts proteins S3 and S10.

Its function is as follows. Binds 16S rRNA, required for the assembly of 30S particles and may also be responsible for determining the conformation of the 16S rRNA at the A site. The polypeptide is Small ribosomal subunit protein uS14 (Rhizobium meliloti (strain 1021) (Ensifer meliloti)).